The primary structure comprises 244 residues: 5-oxoprolinase subunit A (244 aa).

This sequence belongs to the LamB/PxpA family. In terms of assembly, forms a complex composed of PxpA, PxpB and PxpC.

The catalysed reaction is 5-oxo-L-proline + ATP + 2 H2O = L-glutamate + ADP + phosphate + H(+). Functionally, catalyzes the cleavage of 5-oxoproline to form L-glutamate coupled to the hydrolysis of ATP to ADP and inorganic phosphate. This chain is 5-oxoprolinase subunit A, found in Escherichia coli O157:H7.